Here is a 396-residue protein sequence, read N- to C-terminus: S-adenosylmethionine synthase (396 aa).

ATP is bound at residue His16. Asp18 is a Mg(2+) binding site. Glu44 provides a ligand contact to K(+). Residues Glu57 and Gln100 each contribute to the L-methionine site. The tract at residues 100-110 (QSVDIAQGVDR) is flexible loop. ATP contacts are provided by residues 165–167 (DAK), Asp240, 246–247 (RK), Ala263, and Lys267. Asp240 is a binding site for L-methionine. Lys271 contributes to the L-methionine binding site.

This sequence belongs to the AdoMet synthase family. Homotetramer; dimer of dimers. It depends on Mg(2+) as a cofactor. The cofactor is K(+).

Its subcellular location is the cytoplasm. It catalyses the reaction L-methionine + ATP + H2O = S-adenosyl-L-methionine + phosphate + diphosphate. The protein operates within amino-acid biosynthesis; S-adenosyl-L-methionine biosynthesis; S-adenosyl-L-methionine from L-methionine: step 1/1. In terms of biological role, catalyzes the formation of S-adenosylmethionine (AdoMet) from methionine and ATP. The overall synthetic reaction is composed of two sequential steps, AdoMet formation and the subsequent tripolyphosphate hydrolysis which occurs prior to release of AdoMet from the enzyme. This Pseudomonas savastanoi pv. phaseolicola (strain 1448A / Race 6) (Pseudomonas syringae pv. phaseolicola (strain 1448A / Race 6)) protein is S-adenosylmethionine synthase.